A 340-amino-acid chain; its full sequence is L-threonine 3-dehydrogenase (340 aa).

Cysteine 38 lines the Zn(2+) pocket. Catalysis depends on charge relay system residues threonine 40 and histidine 43. Zn(2+)-binding residues include histidine 63, glutamate 64, cysteine 93, cysteine 96, cysteine 99, and cysteine 107. Residues isoleucine 175, aspartate 195, arginine 200, 261 to 263 (LGI), and 285 to 286 (IY) contribute to the NAD(+) site.

This sequence belongs to the zinc-containing alcohol dehydrogenase family. In terms of assembly, homotetramer. Requires Zn(2+) as cofactor.

It localises to the cytoplasm. The catalysed reaction is L-threonine + NAD(+) = (2S)-2-amino-3-oxobutanoate + NADH + H(+). It functions in the pathway amino-acid degradation; L-threonine degradation via oxydo-reductase pathway; glycine from L-threonine: step 1/2. Its function is as follows. Catalyzes the NAD(+)-dependent oxidation of L-threonine to 2-amino-3-ketobutyrate. This Xanthomonas euvesicatoria pv. vesicatoria (strain 85-10) (Xanthomonas campestris pv. vesicatoria) protein is L-threonine 3-dehydrogenase.